We begin with the raw amino-acid sequence, 563 residues long: Eukaryotic translation initiation factor 3 subunit D-1 (563 aa).

A disordered region spans residues 98 to 136 (VQKPPHQRGRFRNMRGRGGRGRNPRGGLNNHHHHGMTTL). The span at 100 to 120 (KPPHQRGRFRNMRGRGGRGRN) shows a compositional bias: basic residues. An RNA gate region spans residues 291-305 (EFDLLTVNESSVEPP).

The protein belongs to the eIF-3 subunit D family. In terms of assembly, component of the eukaryotic translation initiation factor 3 (eIF-3) complex. The eIF-3 complex interacts with pix.

The protein resides in the cytoplasm. Functionally, mRNA cap-binding component of the eukaryotic translation initiation factor 3 (eIF-3) complex, which is involved in protein synthesis of a specialized repertoire of mRNAs and, together with other initiation factors, stimulates binding of mRNA and methionyl-tRNAi to the 40S ribosome. The eIF-3 complex specifically targets and initiates translation of a subset of mRNAs involved in cell proliferation. In the eIF-3 complex, eif3d specifically recognizes and binds the 7-methylguanosine cap of a subset of mRNAs. The chain is Eukaryotic translation initiation factor 3 subunit D-1 from Drosophila pseudoobscura pseudoobscura (Fruit fly).